Here is a 620-residue protein sequence, read N- to C-terminus: MATREHELRPEQERLGEDREEYEDGEEEEEEGEEGWDDWESDGDDAGGGGGGGGLLCLFCSARFDSESSLFSHCASEHRFDFYRVVKETGMDFYGCIKLINFVRSKVAENKCWSCGQVFSSNSELCGHLHALEIPQLEGKVPWGDDVYLKPFLEDDSLLHSLSVFDDDDEDDCGMPMEKGGCSAGNGSLAETCESNLKSIINDGSDVIDRFERTCTIESTDGECSGSLAQEPSDKQLKIARASAAARGIKSVDESYFGSYSSFGIHREMLGDKVRTEAYRDALLGNPSLMNGATVLDVGCGTGILSLFAAKAGASRVIAVDGSAKMVSVATEVAKSNGFLYDENMEMQQKRDTQVITVVHTKAEELNHKIQVPSNKFDVLVSEWMGYCLLYESMLSSVLYARDHFLKPGGAILPDTATIFGAGFGKGGTSLPFWENVYGFDMSCIGKEVTGNSARFPVVDILASEDIVTETAVLNSFDLATMKENEMDFTSSFELRLSESGVSQSGVTWCYGIILWFDTGFTNRFCKEKPVNLSTSPFSTPTHWSQTIFTFEEPIAMAKEESAVVSSASVGTDECPAVMIRSRISIVRASEHRSIDISIETTGISSDGRKRSWPVQIFNL.

A compositionally biased stretch (basic and acidic residues) spans 1-17 (MATREHELRPEQERLGE). The disordered stretch occupies residues 1–45 (MATREHELRPEQERLGEDREEYEDGEEEEEEGEEGWDDWESDGDD). Acidic residues predominate over residues 18 to 45 (DREEYEDGEEEEEEGEEGWDDWESDGDD). The segment at 55–78 (LLCLFCSARFDSESSLFSHCASEH) adopts a C2H2-type 1 zinc-finger fold. The C2H2-type 2; degenerate zinc-finger motif lies at 110–137 (NKCWSCGQVFSSNSELCGHLHALEIPQL). Residues 253-582 (DESYFGSYSS…DECPAVMIRS (330 aa)) enclose the SAM-dependent MTase PRMT-type domain. The S-adenosyl-L-homocysteine site is built by R275, G299, D321, S323, and E364. Active-site residues include E383 and E392.

It belongs to the class I-like SAM-binding methyltransferase superfamily. Protein arginine N-methyltransferase family.

It is found in the cytoplasm. The protein localises to the cytosol. The enzyme catalyses L-arginyl-[protein] + S-adenosyl-L-methionine = N(omega)-methyl-L-arginyl-[protein] + S-adenosyl-L-homocysteine + H(+). It carries out the reaction L-arginyl-[protein] + 2 S-adenosyl-L-methionine = N(omega),N(omega)-dimethyl-L-arginyl-[protein] + 2 S-adenosyl-L-homocysteine + 2 H(+). In terms of biological role, protein-arginine N-methyltransferase that catalyzes both the monomethylation and asymmetric dimethylation of the guanidino nitrogens of arginine residues in target proteins, and therefore falls into the group of type I methyltransferases. The chain is Probable protein arginine N-methyltransferase 3 (PRMT3) from Oryza sativa subsp. japonica (Rice).